We begin with the raw amino-acid sequence, 331 residues long: Cytosolic 5'-nucleotidase 3A (331 aa).

Asp83 acts as the Nucleophile in catalysis. Positions 83 and 85 each coordinate Mg(2+). The Proton donor role is filled by Asp85. A CMP-binding site is contributed by Glu130. N(7)-methyl-GMP-binding residues include Glu130 and Ser151. Substrate is bound by residues 198–199 (SA) and Lys247. Asp272 contributes to the Mg(2+) binding site.

The protein belongs to the pyrimidine 5'-nucleotidase family.

It localises to the cytoplasm. The catalysed reaction is N(7)-methyl-GMP + H2O = N(7)-methylguanosine + phosphate. It catalyses the reaction a ribonucleoside 5'-phosphate + H2O = a ribonucleoside + phosphate. Its function is as follows. Nucleotidase which shows specific activity towards cytidine monophosphate (CMP) and 7-methylguanosine monophosphate (m(7)GMP). CMP seems to be the preferred substrate. This is Cytosolic 5'-nucleotidase 3A (NT5C3A) from Gallus gallus (Chicken).